Reading from the N-terminus, the 448-residue chain is tRNA(Ile)-lysidine synthase (448 aa).

Position 25–30 (25–30 (SGGSDS)) interacts with ATP.

This sequence belongs to the tRNA(Ile)-lysidine synthase family.

It localises to the cytoplasm. It catalyses the reaction cytidine(34) in tRNA(Ile2) + L-lysine + ATP = lysidine(34) in tRNA(Ile2) + AMP + diphosphate + H(+). Ligates lysine onto the cytidine present at position 34 of the AUA codon-specific tRNA(Ile) that contains the anticodon CAU, in an ATP-dependent manner. Cytidine is converted to lysidine, thus changing the amino acid specificity of the tRNA from methionine to isoleucine. The protein is tRNA(Ile)-lysidine synthase of Brucella suis biovar 1 (strain 1330).